The primary structure comprises 432 residues: Uracil permease (432 aa).

12 helical membrane passes run 25–45 (LFAM…DPSI), 65–85 (VPAY…AKTA), 89–109 (GAAM…ALII), 124–144 (VVVG…AVGM), 155–175 (LLHF…SVLA), 181–201 (LIPV…VGLV), 206–226 (VAAA…DYPV), 228–248 (VTWE…SEHI), 305–325 (VYSV…GFVG), 330–350 (LISS…FGII), 370–390 (NLVI…LKIS), and 393–413 (FQIT…LILP).

It belongs to the nucleobase:cation symporter-2 (NCS2) (TC 2.A.40) family.

The protein localises to the cell membrane. Transport of uracil in the cell. This is Uracil permease (pyrP) from Bacillus caldolyticus.